The sequence spans 64 residues: Large ribosomal subunit protein bL35 (64 aa).

The protein belongs to the bacterial ribosomal protein bL35 family.

The polypeptide is Large ribosomal subunit protein bL35 (Ectopseudomonas mendocina (strain ymp) (Pseudomonas mendocina)).